Here is a 435-residue protein sequence, read N- to C-terminus: Actin-like protein 7A (435 aa).

Residues 1–64 form a disordered region; sequence MWAPPAAIMG…TESKAAKERP (64 aa). The span at 20-31 shows a compositional bias: low complexity; the sequence is QAPLQTQALQTA. A required for interaction with TES region spans residues 31–51; sequence ASLRDGPAKRAVWVRHTSSEP. Basic and acidic residues predominate over residues 55 to 64; it reads TESKAAKERP.

The protein belongs to the actin family. In terms of assembly, interacts (via N-terminus) with TES (via LIM domain 2). Heterodimer with TES; the heterodimer interacts with ENAH to form a heterotrimer. Interacts with ACTL9. Interacts with CYLC1; the interaction may be relevant for proper acrosome attachment to the nuclear envelope. In terms of tissue distribution, strongly expressed in testis. Also expressed in other tissues.

The protein localises to the cytoplasm. Its subcellular location is the cytoskeleton. It localises to the golgi apparatus. The protein resides in the nucleus. It is found in the cytoplasmic vesicle. The protein localises to the secretory vesicle. Its subcellular location is the acrosome. Functionally, essential for normal spermatogenesis and male fertility. Required for normal sperm head morphology, acroplaxome formation, acrosome attachment, and acrosome granule stability. May anchor and stabilize acrosomal adherence to the acroplaxome at least in part by facilitating the presence of F-actin in the subacrosomal space. May play an important role in formation and fusion of Golgi-derived vesicles during acrosome biogenesis. The protein is Actin-like protein 7A (ACTL7A) of Homo sapiens (Human).